A 304-amino-acid polypeptide reads, in one-letter code: Glutaminase (304 aa).

The substrate site is built by Ser-63, Asn-114, Glu-158, Asn-165, Tyr-189, Tyr-240, and Val-258.

This sequence belongs to the glutaminase family. Homotetramer.

It catalyses the reaction L-glutamine + H2O = L-glutamate + NH4(+). The protein is Glutaminase of Shewanella baltica (strain OS223).